A 429-amino-acid polypeptide reads, in one-letter code: Divergent protein kinase domain 2A (429 aa).

Residues 1 to 34 (MLRLASLKFGRLFRYAKVLFAASLLVVMLLNTHS) form the signal peptide.

The protein belongs to the DIPK family.

It is found in the cytoplasmic vesicle. The protein localises to the COPI-coated vesicle. The protein resides in the golgi apparatus. Its subcellular location is the secreted. May play a role in cardiomyocyte proliferation through paracrine signaling and activation of the PPI3K-AKT-CDK7 signaling cascade. This is Divergent protein kinase domain 2A (dipk2a) from Xenopus tropicalis (Western clawed frog).